The following is a 511-amino-acid chain: Protoheme IX farnesyltransferase, mitochondrial (511 aa).

The N-terminal 23 residues, 1–23 (MSSSTESLPGTLRRTLTTSRAPA), are a transit peptide targeting the mitochondrion. Disordered stretches follow at residues 1–27 (MSSS…ATSS) and 50–136 (HDSA…LAPD). Low complexity-rich tracts occupy residues 52 to 79 (SASS…SSTT), 104 to 115 (RKAAAAAAAAAA), and 126 to 136 (PDAPTADLAPD). Transmembrane regions (helical) follow at residues 168–188 (LTVL…VPSF), 197–217 (SLAP…TTLC), 253–273 (AAVL…YFGV), 275–295 (PTVS…YTPL), 303–323 (TWVG…AAAG), 344–364 (LGGW…FMPL), 398–418 (AFIP…SFAV), and 444–464 (ARGL…LALA).

It belongs to the UbiA prenyltransferase family.

The protein resides in the mitochondrion membrane. In terms of biological role, converts protoheme IX and farnesyl diphosphate to heme O. The protein is Protoheme IX farnesyltransferase, mitochondrial (pft-1) of Neurospora crassa (strain ATCC 24698 / 74-OR23-1A / CBS 708.71 / DSM 1257 / FGSC 987).